The sequence spans 344 residues: tRNA N6-adenosine threonylcarbamoyltransferase (344 aa).

Fe cation-binding residues include His-111 and His-115. Residues 134–138, Asp-167, Gly-180, and Asn-277 each bind substrate; that span reads LVSGG. Asp-305 is a Fe cation binding site.

Belongs to the KAE1 / TsaD family. Fe(2+) serves as cofactor.

The protein localises to the cytoplasm. It carries out the reaction L-threonylcarbamoyladenylate + adenosine(37) in tRNA = N(6)-L-threonylcarbamoyladenosine(37) in tRNA + AMP + H(+). Functionally, required for the formation of a threonylcarbamoyl group on adenosine at position 37 (t(6)A37) in tRNAs that read codons beginning with adenine. Is involved in the transfer of the threonylcarbamoyl moiety of threonylcarbamoyl-AMP (TC-AMP) to the N6 group of A37, together with TsaE and TsaB. TsaD likely plays a direct catalytic role in this reaction. In Glaesserella parasuis serovar 5 (strain SH0165) (Haemophilus parasuis), this protein is tRNA N6-adenosine threonylcarbamoyltransferase.